The following is a 469-amino-acid chain: ATP synthase subunit beta (469 aa).

Residue 156 to 163 (GGAGVGKT) participates in ATP binding.

This sequence belongs to the ATPase alpha/beta chains family. F-type ATPases have 2 components, CF(1) - the catalytic core - and CF(0) - the membrane proton channel. CF(1) has five subunits: alpha(3), beta(3), gamma(1), delta(1), epsilon(1). CF(0) has three main subunits: a(1), b(2) and c(9-12). The alpha and beta chains form an alternating ring which encloses part of the gamma chain. CF(1) is attached to CF(0) by a central stalk formed by the gamma and epsilon chains, while a peripheral stalk is formed by the delta and b chains.

The protein localises to the cell membrane. It catalyses the reaction ATP + H2O + 4 H(+)(in) = ADP + phosphate + 5 H(+)(out). Produces ATP from ADP in the presence of a proton gradient across the membrane. The catalytic sites are hosted primarily by the beta subunits. This chain is ATP synthase subunit beta, found in Bacillus cereus (strain AH820).